The sequence spans 359 residues: DNA polymerase IV (359 aa).

Residues 4–185 (IIHVDMDCFF…LALIKIPGVG (182 aa)) form the UmuC domain. Mg(2+) is bound by residues Asp-8 and Asp-103. Glu-104 is an active-site residue.

It belongs to the DNA polymerase type-Y family. In terms of assembly, monomer. Mg(2+) is required as a cofactor.

The protein localises to the cytoplasm. The enzyme catalyses DNA(n) + a 2'-deoxyribonucleoside 5'-triphosphate = DNA(n+1) + diphosphate. Its function is as follows. Poorly processive, error-prone DNA polymerase involved in untargeted mutagenesis. Copies undamaged DNA at stalled replication forks, which arise in vivo from mismatched or misaligned primer ends. These misaligned primers can be extended by PolIV. Exhibits no 3'-5' exonuclease (proofreading) activity. May be involved in translesional synthesis, in conjunction with the beta clamp from PolIII. This is DNA polymerase IV from Shewanella loihica (strain ATCC BAA-1088 / PV-4).